Consider the following 422-residue polypeptide: MTAEKITQGTEGLNVPNEPIIPFIIGDGIGPDIWKAASRVIDAAVEKAYNGEKRIEWKEVLAGQKAFDTTGEWLPQETLDTIKEYLIAVKGPLTTPIGGGIRSLNVALRQELDLFTCLRPVRWFKGVPSPVKRPQDVDMVIFRENTEDIYAGIEFKEGTTEVKKVIDFLQNEMGATNIRFPETSGIGIKPVSKEGTERLVRAAIQYAIDNNRKSVTLVHKGNIMKFTEGSFKQWGYDLALSEFGDQVFTWQQYDEIVENEGRDAANAAQEKAEKEGKIIIKDSIADIFLQQILTRPAEHDVVATMNLNGDYISDALAAQVGGIGIAPGANINYETGHAIFEATHGTAPKYAGLNKVNPSSVILSSVLMLEHLGWQEAADKITDSIEDTIASKVVTYDFARLMDGAEEVSTSAFADELIKNLK.

Threonine 94 contacts NADP(+). Residues serine 103, asparagine 105, arginine 109, arginine 119, and arginine 143 each contribute to the D-threo-isocitrate site. Aspartate 310 lines the Mg(2+) pocket. NADP(+) contacts are provided by residues 344–350, asparagine 357, tyrosine 396, and arginine 400; that span reads HGTAPKY.

The protein belongs to the isocitrate and isopropylmalate dehydrogenases family. Homodimer. It depends on Mg(2+) as a cofactor. Requires Mn(2+) as cofactor.

The catalysed reaction is D-threo-isocitrate + NADP(+) = 2-oxoglutarate + CO2 + NADPH. Catalyzes the oxidative decarboxylation of isocitrate to 2-oxoglutarate and carbon dioxide with the concomitant reduction of NADP(+). This Staphylococcus aureus (strain COL) protein is Isocitrate dehydrogenase [NADP] (icd).